Here is a 520-residue protein sequence, read N- to C-terminus: Legumin A2 (520 aa).

The signal sequence occupies residues 1 to 22 (MATKLLALSLSFCFLLLGGCFA). Intrachain disulfides connect cysteine 32/cysteine 65 and cysteine 108/cysteine 342. A Cupin type-1 1 domain is found at 37–233 (LNALEPDNRI…AFNVNRHIVD (197 aa)). A disordered region spans residues 250-339 (VKGGLSIISP…RRQGDNGLEE (90 aa)). One can recognise a Cupin type-1 2 domain in the interval 348 to 497 (LNIGPSSSPD…TFNLQRNEAR (150 aa)).

Belongs to the 11S seed storage protein (globulins) family. In terms of assembly, hexamer; each subunit is composed of an acidic and a basic chain derived from a single precursor and linked by a disulfide bond.

Its function is as follows. This protein found in the seeds of many leguminous and non-leguminous plants is the source of sulfur-containing amino acids in seed meals. This Pisum sativum (Garden pea) protein is Legumin A2 (LEGA2).